Reading from the N-terminus, the 84-residue chain is UPF0473 protein CLJ_B2791 (84 aa).

It belongs to the UPF0473 family.

In Clostridium botulinum (strain 657 / Type Ba4), this protein is UPF0473 protein CLJ_B2791.